The chain runs to 346 residues: Cell division protein ZipA (346 aa).

At 1-6 (MEDLQL) the chain is on the periplasmic side. Residues 7–27 (VLFVLGAIAIVAVLVHGFWSI) traverse the membrane as a helical segment. Residues 28-346 (RRQQPKSLKD…DYLHRIRANA (319 aa)) lie on the Cytoplasmic side of the membrane. Residues 116 to 146 (EPSMAQPDFSLQSPTAKEQHRGPKASRQEPV) are disordered.

This sequence belongs to the ZipA family. In terms of assembly, interacts with FtsZ via their C-terminal domains.

Its subcellular location is the cell inner membrane. In terms of biological role, essential cell division protein that stabilizes the FtsZ protofilaments by cross-linking them and that serves as a cytoplasmic membrane anchor for the Z ring. Also required for the recruitment to the septal ring of downstream cell division proteins. The protein is Cell division protein ZipA of Shewanella sp. (strain ANA-3).